The following is a 134-amino-acid chain: Small ribosomal subunit protein uS11 (134 aa).

Belongs to the universal ribosomal protein uS11 family. In terms of assembly, part of the 30S ribosomal subunit. Interacts with proteins S7 and S18. Binds to IF-3.

Functionally, located on the platform of the 30S subunit, it bridges several disparate RNA helices of the 16S rRNA. Forms part of the Shine-Dalgarno cleft in the 70S ribosome. This Albidiferax ferrireducens (strain ATCC BAA-621 / DSM 15236 / T118) (Rhodoferax ferrireducens) protein is Small ribosomal subunit protein uS11.